A 199-amino-acid chain; its full sequence is CASP-like protein 1B2 (199 aa).

Over 1 to 22 the chain is Cytoplasmic; that stretch reads MALQSEEKLEVGYSSLQPKTRK. Residues 23-43 form a helical membrane-spanning segment; the sequence is WVLLMLRVLAFFATAAATVVM. The Extracellular segment spans residues 44 to 74; sequence GLNKETKTLVVATVGSTPIKASLAAKFQHTP. A helical transmembrane segment spans residues 75-95; sequence AFVFFVIANGLASIHNLVMIM. Topologically, residues 96-112 are cytoplasmic; it reads GDLFGQKLDYKGLRLAM. The helical transmembrane segment at 113-133 threads the bilayer; the sequence is IAILDMMTVALVSGGVSAAAF. At 134–163 the chain is on the extracellular side; sequence MAELGKNGNSHARWNKICDKFETFCDHGGG. Residues 164 to 184 traverse the membrane as a helical segment; sequence ALIASFAGLILMLIISVMSII. The Cytoplasmic portion of the chain corresponds to 185 to 199; sequence KLLIKPKPDSTIVVP.

Belongs to the Casparian strip membrane proteins (CASP) family. In terms of assembly, homodimer and heterodimers.

The protein resides in the cell membrane. This is CASP-like protein 1B2 from Populus trichocarpa (Western balsam poplar).